Reading from the N-terminus, the 332-residue chain is Trace amine-associated receptor 1 (332 aa).

The Extracellular segment spans residues 1 to 23; the sequence is MHLCHAITNISHRNSDWSREVQA. N-linked (GlcNAc...) asparagine glycosylation is present at Asn-9. A helical membrane pass occupies residues 24-48; the sequence is SLYSLMSLIILATLVGNLIVIISIS. The Cytoplasmic portion of the chain corresponds to 49 to 58; the sequence is HFKQLHTPTN. The chain crosses the membrane as a helical span at residues 59–80; it reads WLLHSMAIVDFLLGCLIMPCSM. Residues 81-95 lie on the Extracellular side of the membrane; that stretch reads VRTVERCWYFGEILC. An intrachain disulfide couples Cys-95 to Cys-181. The helical transmembrane segment at 96-118 threads the bilayer; that stretch reads KVHTSTDIMLSSASIFHLAFISI. Asp-102 lines the 2-phenylethylamine pocket. Residues 119-138 lie on the Cytoplasmic side of the membrane; that stretch reads DRYCAVCDPLRYKAKINIST. Residues 139-160 form a helical membrane-spanning segment; sequence ILVMILVSWSLPAVYAFGMIFL. The Extracellular segment spans residues 161–187; that stretch reads ELNLKGVEELYRSQVSDLGGCSPFFSK. The interval 174 to 185 is extracellular Loop 2 (ECL2); that stretch reads QVSDLGGCSPFF. Residues 188-210 traverse the membrane as a helical segment; that stretch reads VSGVLAFMTSFYIPGSVMLFVYY. The Cytoplasmic segment spans residues 211-246; sequence RIYFIAKGQARSINRTNVQVGLEGKSQAPQSKETKA. Residues 247-270 form a helical membrane-spanning segment; that stretch reads AKTLGIMVGVFLVCWCPFFLCTVL. Topologically, residues 271 to 283 are extracellular; it reads DPFLGYVIPPSLN. A helical membrane pass occupies residues 284-304; that stretch reads DALYWFGYLNSALNPMVYAFF. At 305-332 the chain is on the cytoplasmic side; the sequence is YPWFRRALKMVLLGKIFQKDSSRSKLFL.

It belongs to the G-protein coupled receptor 1 family. In terms of tissue distribution, widely distributed throughout the brain. Strongly expressed in the mitral cell layer of the olfactory bulb, piriform cortex, the arcuate, motor, and mesencephalic trigeminal nuclei, lateral reticular and hypoglossal nuclei, cerebellar Purkinje cells, and ventral horn of the spinal cord. Moderately expressed in the frontal, entorhinal, and agranular cortices, the ventral pallidum, thalamus, hippocampus, several hypothalamic nuclei, ambiguus, dorsal raphe, and gigantocellular reticular nuclei. Weakly expressed in the septum, basal ganglia, amygdala, myelencephalon, and spinal cord dorsal horn. Particularly interesting is the moderate expression in several monoaminergic cell groups, namely the dorsal raphe, the locus coeruleus, and the ventral tegmental area.

The protein resides in the endomembrane system. It localises to the endoplasmic reticulum membrane. It is found in the cell membrane. Its activity is regulated as follows. Activated by SEP-363856 small molecule: IHCH-7179 acts both as an agonist activator for HTR1A and TAAR1. In terms of biological role, intracellular G-protein coupled receptor for trace amines, which recognizes endogenous amine-containing metabolites such as beta-phenylethylamine (beta-PEA), 3-iodothyronamine (T1AM), isoamylamine (IAA), cadaverine (CAD), cyclohexylamine (CHA), p-tyramine (p-TYR), trimethylamine (TMA), octopamine and tryptamine. Also functions as a receptor for various drugs and psychoactive substances, such as amphetamine and methamphetamine. Unresponsive to classical biogenic amines, such as epinephrine and histamine and only partially activated by dopamine and serotonin. Expressed in both the central and peripheral nervous system: TAAR1 activation regulates the activity of several neurotransmitter signaling pathways by (1) decreasing the basal firing rates of the neurons involved and by (2) lowering the sensitivity of receptors to neurotransmitters. Ligand binding causes a conformation change that triggers signaling via guanine nucleotide-binding proteins (G proteins) and modulates the activity of downstream effectors. TAAR1 is coupled with different G(i)/G(o)-, G(s)- or G(q)/G(11) classes of G alpha proteins depending on the ligand. CAD-binding is coupled to G(i)/G(o) G alpha proteins and mediates inhibition of adenylate cyclase activity. T1AM- or beta-PEA-binding is coupled to G(s) G alpha proteins and mediates activation of adenylate cyclase activity. CHA- or IAA-binding is coupled to G(q)/G(11) G alpha proteins and activates phospholipase C-beta, releasing diacylglycerol (DAG) and inositol 1,4,5-trisphosphate (IP3) second messengers. TMA-binding is coupled with all three G(i)/G(o)-, G(s)- or G(q)/G(11) G alpha protein subtypes. The polypeptide is Trace amine-associated receptor 1 (Mus musculus (Mouse)).